The sequence spans 560 residues: DNA ligase B (560 aa).

Lysine 124 (N6-AMP-lysine intermediate) is an active-site residue.

This sequence belongs to the NAD-dependent DNA ligase family. LigB subfamily.

The enzyme catalyses NAD(+) + (deoxyribonucleotide)n-3'-hydroxyl + 5'-phospho-(deoxyribonucleotide)m = (deoxyribonucleotide)n+m + AMP + beta-nicotinamide D-nucleotide.. Catalyzes the formation of phosphodiester linkages between 5'-phosphoryl and 3'-hydroxyl groups in double-stranded DNA using NAD as a coenzyme and as the energy source for the reaction. The protein is DNA ligase B of Escherichia coli O139:H28 (strain E24377A / ETEC).